The sequence spans 1225 residues: Cohesin subunit SA-3 (1225 aa).

Residues 1-97 are disordered; that stretch reads MSSPLQRAVG…HSRKQSEPPA (97 aa). Residues 15–26 show a composition bias toward low complexity; it reads ALSASSSSSASL. Positions 45–54 are enriched in acidic residues; sequence LADEDTDFED. Basic residues-rich tracts occupy residues 59 to 69 and 76 to 90; these read NVKKRAAKRPP and KHPK…RHSR. The SCD domain occupies 309-394; it reads FVHRYRDVLP…SRFKDRMVSM (86 aa). 3 disordered regions span residues 546 to 567, 1063 to 1113, and 1177 to 1225; these read SEGH…KERK, AETS…STAV, and EEDE…IEDF. Positions 1078–1089 are enriched in basic and acidic residues; sequence VEGPAKPNREDV. A compositionally biased stretch (low complexity) spans 1090–1099; the sequence is SSSQEESLQL. Over residues 1177–1191 the composition is skewed to acidic residues; that stretch reads EEDEEEELEIQDESN. Over residues 1198–1209 the composition is skewed to polar residues; it reads DMQASSYSSTSE. Ser-1203 is modified (phosphoserine). The span at 1216-1225 shows a compositional bias: acidic residues; sequence DSTELDIEDF.

The protein belongs to the SCC3 family. Component of the meiosis-specific cohesin complex, which also contains the SMC1 (SMC1A or SMC1B) and SMC3 heterodimer. Such complex likely contains RAD21, or the meiosis-specific related protein REC8. Interacts with CCDC79/TERB1; recruiting cohesin to telomeres to develop structural rigidity. Phosphorylated. As to expression, testis specific.

The protein resides in the nucleus. It is found in the chromosome. The protein localises to the centromere. In terms of biological role, meiosis specific component of cohesin complex. The cohesin complex is required for the cohesion of sister chromatids after DNA replication. The cohesin complex apparently forms a large proteinaceous ring within which sister chromatids can be trapped. At anaphase, the complex is cleaved and dissociates from chromatin, allowing sister chromatids to segregate. The meiosis-specific cohesin complex probably replaces mitosis specific cohesin complex when it dissociates from chromatin during prophase I. This Homo sapiens (Human) protein is Cohesin subunit SA-3 (STAG3).